The following is a 196-amino-acid chain: Putative NADH dehydrogenase/NAD(P)H nitroreductase PST_3601 (196 aa).

Belongs to the nitroreductase family. HadB/RutE subfamily. FMN is required as a cofactor.

This Stutzerimonas stutzeri (strain A1501) (Pseudomonas stutzeri) protein is Putative NADH dehydrogenase/NAD(P)H nitroreductase PST_3601.